The chain runs to 734 residues: Serine protease FAM111B (734 aa).

Residue methionine 1 is modified to N-acetylmethionine. Composition is skewed to basic and acidic residues over residues 1–10 (MNSMKTEENK) and 17–32 (DDQR…TVMK). Residues 1 to 32 (MNSMKTEENKSFSAMEDDQRTRPEVSKDTVMK) form a disordered region. A Glycyl lysine isopeptide (Lys-Gly) (interchain with G-Cter in SUMO2) cross-link involves residue lysine 284. A disordered region spans residues 285–321 (QNESATDEINHQSLIQSKKKVHKPKKDGETKDVEHSR). A compositionally biased stretch (basic and acidic residues) spans 310-321 (KDGETKDVEHSR). Residues histidine 490, aspartate 544, and serine 650 each act as charge relay system in the active site. The disordered stretch occupies residues 712-734 (TYDEEKGKQESSLQDHQIEPMEC).

This sequence belongs to the FAM111 family. In terms of tissue distribution, widely expressed.

In terms of biological role, serine protease. The polypeptide is Serine protease FAM111B (Homo sapiens (Human)).